The following is a 461-amino-acid chain: Probable carboxypeptidase MGYG_04702 (461 aa).

Residues 1 to 20 (MQKTYLLALVSLLASSLVEA) form the signal peptide. N-linked (GlcNAc...) asparagine glycans are attached at residues Asn-48 and Asn-99. Asp-176 lines the Zn(2+) pocket. Catalysis depends on Glu-208, which acts as the Proton acceptor. Residue Glu-209 participates in Zn(2+) binding. The N-linked (GlcNAc...) asparagine glycan is linked to Asn-396.

Belongs to the peptidase M20A family. The cofactor is Zn(2+).

It is found in the secreted. The protein is Probable carboxypeptidase MGYG_04702 of Arthroderma gypseum (strain ATCC MYA-4604 / CBS 118893) (Microsporum gypseum).